The primary structure comprises 699 residues: Bifunctional protein GAL10 (699 aa).

The segment at 1–357 is galactowaldenase; that stretch reads MTAQLQSEST…TTENPFGYQL (357 aa). An NAD(+)-binding site is contributed by 13-44; sequence IVLVTGGAGYIGSHTVVELIENGYDCVVADNL. The tract at residues 358-699 is mutarotase; it reads RGVEARFSAE…YGSKIVYRFS (342 aa). His537 functions as the For mutarotase activity in the catalytic mechanism. Position 562 is a phosphoserine (Ser562).

In the N-terminal section; belongs to the NAD(P)-dependent epimerase/dehydratase family. This sequence in the C-terminal section; belongs to the aldose epimerase family. Requires NAD(+) as cofactor.

It catalyses the reaction UDP-alpha-D-glucose = UDP-alpha-D-galactose. The enzyme catalyses alpha-D-glucose = beta-D-glucose. It functions in the pathway carbohydrate metabolism; galactose metabolism. The protein operates within carbohydrate metabolism; hexose metabolism. Functionally, mutarotase converts alpha-aldose to the beta-anomer. It is active on D-glucose, L-arabinose, D-xylose, D-galactose, maltose and lactose. The sequence is that of Bifunctional protein GAL10 (GAL10) from Saccharomyces cerevisiae (strain ATCC 204508 / S288c) (Baker's yeast).